Consider the following 121-residue polypeptide: Acid shock protein (121 aa).

A signal peptide spans Met1–Ala21. The propeptide occupies Ala22–Gln63. The disordered stretch occupies residues Ala40–Ala121. Positions Val74–Gln83 are enriched in low complexity. Residues Ala84–Ser93 are compositionally biased toward basic residues. Positions Val94–Gln103 are enriched in low complexity. A compositionally biased stretch (basic residues) spans Ala104 to Lys113.

Belongs to the Asr family. In terms of processing, proteolytic processing gives rise to the active protein.

The protein localises to the periplasm. In terms of biological role, required for growth and/or survival at acidic conditions. The polypeptide is Acid shock protein (Yersinia pseudotuberculosis serotype O:1b (strain IP 31758)).